A 584-amino-acid chain; its full sequence is Phenylalanine--tRNA ligase beta subunit (584 aa).

Residues 290–369 (FSVRTKTVTH…RALGFNSLEP (80 aa)) form the B5 domain. 4 residues coordinate Mg(2+): aspartate 347, aspartate 353, aspartate 356, and aspartate 357.

Belongs to the phenylalanyl-tRNA synthetase beta subunit family. Type 2 subfamily. In terms of assembly, tetramer of two alpha and two beta subunits. Mg(2+) is required as a cofactor.

Its subcellular location is the cytoplasm. It catalyses the reaction tRNA(Phe) + L-phenylalanine + ATP = L-phenylalanyl-tRNA(Phe) + AMP + diphosphate + H(+). This is Phenylalanine--tRNA ligase beta subunit from Haloarcula marismortui (strain ATCC 43049 / DSM 3752 / JCM 8966 / VKM B-1809) (Halobacterium marismortui).